Here is a 1670-residue protein sequence, read N- to C-terminus: Hemolymph clottable protein (1670 aa).

An N-terminal signal peptide occupies residues 1–14 (MKALILLLLGACQA). Residues 15–674 (LQPGLEYQYR…FANFVTTTIY (660 aa)) are vittelogenin. Residues 15-764 (LQPGLEYQYR…LKIDGQQRGL (750 aa)) enclose the Vitellogenin domain. Residue N106 is glycosylated (N-linked (GlcNAc...) asparagine). Low complexity predominate over residues 198-231 (SSYTTKTKSKTSSKTSSKTSSKTSSKTSKTGKTS). A disordered region spans residues 198 to 236 (SSYTTKTKSKTSSKTSSKTSSKTSSKTSKTGKTSPGQLA). N-linked (GlcNAc...) asparagine glycans are attached at residues N319, N459, and N1301. The 161-residue stretch at 1390–1550 (VSCTIDETKV…SWASPGEGCA (161 aa)) folds into the VWFD domain. 2 cysteine pairs are disulfide-bonded: C1392–C1513 and C1414–C1549.

In terms of assembly, homodimer; disulfide-linked. Also exists as oligomers. Post-translationally, glycosylated. Contains mannose and N-acetylglucosamine. Substrate of transglutaminase. In terms of tissue distribution, widely expressed with highest levels in gill and heart. Not expressed in hemocytes.

Its subcellular location is the secreted. Functionally, forms stable clots in the presence of calcium. In Penaeus monodon (Giant tiger prawn), this protein is Hemolymph clottable protein.